Here is a 283-residue protein sequence, read N- to C-terminus: Accumulation of dyads protein 2 (283 aa).

Residues 1-41 form a disordered region; the sequence is MSDKEQTSGNTDLENAPAGYYSSHDNDVNGVAEDERPSHDS. The Cytoplasmic portion of the chain corresponds to 1-89; it reads MSDKEQTSGN…APAPVHKFAN (89 aa). Residues 90-110 form a helical membrane-spanning segment; sequence PAPLGLSAFALTTFVLSMFNA. Over 111-120 the chain is Extracellular; it reads RAQGITVPNV. A helical membrane pass occupies residues 121 to 141; sequence VVGCAMFYGGLVQLIAGIWEI. Over 142–151 the chain is Cytoplasmic; that stretch reads ALENTFGGTA. Residues 152 to 172 form a helical membrane-spanning segment; the sequence is LCSYGGFWLSFAAIYIPWFGI. The Extracellular portion of the chain corresponds to 173-185; it reads LEAYEDNESDLNN. A helical transmembrane segment spans residues 186-206; the sequence is ALGFYLLGWAIFTFGLTVCTM. Topologically, residues 207 to 208 are cytoplasmic; the sequence is KS. A helical transmembrane segment spans residues 209-229; that stretch reads TVMFFLLFFLLALTFLLLSIG. The Extracellular portion of the chain corresponds to 230–240; the sequence is HFANRLGVTRA. A helical membrane pass occupies residues 241 to 261; it reads GGVLGVVVAFIAWYNAYAGVA. The Cytoplasmic portion of the chain corresponds to 262 to 283; sequence TKQNSYVLARPFPLPSTERVIF.

Belongs to the acetate uptake transporter (AceTr) (TC 2.A.96) family.

The protein resides in the cell membrane. Its subcellular location is the vacuole membrane. Functionally, transporter protein required for ammonia export and acetate uptake and resistance. Necessary for up-regulation and down-regulation of meiotic plaque (MP) component levels in a dependency on external acetate. Has a role in ascus formation. The sequence is that of Accumulation of dyads protein 2 (ADY2) from Saccharomyces cerevisiae (strain ATCC 204508 / S288c) (Baker's yeast).